A 1627-amino-acid polypeptide reads, in one-letter code: Type III effector DspE (1627 aa).

2 stretches are compositionally biased toward polar residues: residues 22–44 (AKTSLSQGNSTSASQKGAQSLIQ) and 59–74 (GNGSSVRSQDSRSTTL). 2 disordered regions span residues 22 to 102 (AKTS…GPIQ) and 436 to 464 (QTQALATDRQGQKHVAPLGQNGLSPTPGW). 3 short sequence motifs (wxxxE) span residues 464 to 468 (WNLSD), 514 to 520 (WEASSVE), and 660 to 667 (WQNAANHD).

It belongs to the AvrE family.

It localises to the secreted. Its subcellular location is the host cell. Major virulence factor that may function as a water- and solute-permeable channel dedicated to creating osmotic/water potential perturbation and a water- and nutrient-rich apoplast in which bacteria multiply within the infected plant tissues. Its function is as follows. Required for plant cell death in N.benthamiana leaves and leaf cell death in S.tuberosum. Essential for pathogenicity. Does not suppress callose formation. This chain is Type III effector DspE, found in Pectobacterium carotovorum (Erwinia carotovora).